The chain runs to 211 residues: RING finger protein 222 (211 aa).

An RING-type zinc finger spans residues 14 to 65; that stretch reads CPVCYEKFRDLDGASRTLSCGHVFCHDCLVKYLLSTRVDGQVQRTIVCPICR. Residues 187–207 form a helical membrane-spanning segment; that stretch reads LITLIAVVAVVAAILPWVLLV.

Its subcellular location is the membrane. This chain is RING finger protein 222 (Rnf222), found in Mus musculus (Mouse).